The chain runs to 43 residues: Protein PsbN (43 aa).

A helical membrane pass occupies residues 7 to 27; the sequence is LSISIGVMVVAITGFSIYTAF.

It belongs to the PsbN family.

The protein resides in the cellular thylakoid membrane. Functionally, may play a role in photosystem I and II biogenesis. In Trichodesmium erythraeum (strain IMS101), this protein is Protein PsbN.